The following is a 105-amino-acid chain: uncharacterized protein (105 aa).

S2 is modified (N-acetylserine).

This is an uncharacterized protein from Saccharomyces cerevisiae (strain ATCC 204508 / S288c) (Baker's yeast).